A 100-amino-acid chain; its full sequence is UPF0235 protein TC_0667 (100 aa).

The protein belongs to the UPF0235 family.

This Chlamydia muridarum (strain MoPn / Nigg) protein is UPF0235 protein TC_0667.